The following is a 149-amino-acid chain: UPF0260 protein Pmen_1776 (149 aa).

It belongs to the UPF0260 family.

This is UPF0260 protein Pmen_1776 from Ectopseudomonas mendocina (strain ymp) (Pseudomonas mendocina).